Reading from the N-terminus, the 766-residue chain is AMP deaminase 3 (766 aa).

Phosphoserine occurs at positions 85 and 107. A disordered region spans residues 89–114; sequence QMPTQQDWKGPPTASPAMSPATPLVP. The span at 99–110 shows a compositional bias: low complexity; it reads PPTASPAMSPAT. Positions 316 and 318 each coordinate Zn(2+). Substrate is bound by residues His318 and 387 to 392; that span reads KFNSKY. His585 lines the Zn(2+) pocket. Glu588 contributes to the substrate binding site. The active-site Proton acceptor is the His607. Residue Asp662 coordinates Zn(2+). 663–666 is a binding site for substrate; that stretch reads DPMQ.

This sequence belongs to the metallo-dependent hydrolases superfamily. Adenosine and AMP deaminases family. Homotetramer. Requires Zn(2+) as cofactor. Found in heart, lung brain, spleen, kidney and to a lesser extent in liver.

The enzyme catalyses AMP + H2O + H(+) = IMP + NH4(+). It functions in the pathway purine metabolism; IMP biosynthesis via salvage pathway; IMP from AMP: step 1/1. AMP deaminase plays a critical role in energy metabolism. The chain is AMP deaminase 3 from Mus musculus (Mouse).